Here is a 496-residue protein sequence, read N- to C-terminus: uncharacterized protein (496 aa).

Mg(2+) is bound by residues aspartate 36, aspartate 81, glutamate 300, glutamate 302, aspartate 321, aspartate 323, and aspartate 375.

It belongs to the XPG/RAD2 endonuclease family. FEN1 subfamily. The cofactor is Mg(2+).

This is an uncharacterized protein from Schizosaccharomyces pombe (strain 972 / ATCC 24843) (Fission yeast).